Here is a 375-residue protein sequence, read N- to C-terminus: Fructose-1,6-bisphosphate aldolase/phosphatase (375 aa).

Asp-15 acts as the Proton acceptor; for FBP phosphatase activity in catalysis. Residues Asp-15, His-22, Asp-56, and Asp-57 each coordinate Mg(2+). His-22 lines the beta-D-fructose 1,6-bisphosphate pocket. His-22 provides a ligand contact to dihydroxyacetone phosphate. Beta-D-fructose 1,6-bisphosphate is bound at residue Tyr-94. Residue Gln-98 coordinates Mg(2+). 107 to 108 (GN) is a beta-D-fructose 1,6-bisphosphate binding site. A Mg(2+)-binding site is contributed by Asp-135. Lys-136 contacts beta-D-fructose 1,6-bisphosphate. Residue Lys-136 coordinates dihydroxyacetone phosphate. Tyr-237 serves as the catalytic Proton donor/acceptor; for FBP aldolase activity. 3 residues coordinate Mg(2+): Lys-240, Asp-241, and Asp-242. Catalysis depends on Lys-240, which acts as the Schiff-base intermediate with DHAP; for FBP aldolase activity. Beta-D-fructose 1,6-bisphosphate is bound by residues 250 to 251 (QS), Arg-274, Asp-295, and Tyr-357. 2 residues coordinate dihydroxyacetone phosphate: Arg-274 and Asp-295.

Belongs to the FBP aldolase/phosphatase family. Homooctamer; dimer of tetramers. It depends on Mg(2+) as a cofactor.

The catalysed reaction is beta-D-fructose 1,6-bisphosphate = D-glyceraldehyde 3-phosphate + dihydroxyacetone phosphate. The enzyme catalyses beta-D-fructose 1,6-bisphosphate + H2O = beta-D-fructose 6-phosphate + phosphate. Its pathway is carbohydrate biosynthesis; gluconeogenesis. With respect to regulation, FBPase activity is inhibited by Ca(2+), ATP, ADP and phosphoenolpyruvate. In terms of biological role, catalyzes two subsequent steps in gluconeogenesis: the aldol condensation of dihydroxyacetone phosphate (DHAP) and glyceraldehyde-3-phosphate (GA3P) to fructose-1,6-bisphosphate (FBP), and the dephosphorylation of FBP to fructose-6-phosphate (F6P). Can also dephosphorylate, with lower activity, other related substrates including fructose-1-phosphate, fructose-6-phosphate, glucose-1-phosphate, glucose-6-phosphate, glycerol-2-phosphate, phosphoenolpyruvate, 5'-AMP, 6'-ADP and 7'-ATP. The sequence is that of Fructose-1,6-bisphosphate aldolase/phosphatase from Thermococcus onnurineus (strain NA1).